The primary structure comprises 366 residues: MKFTDKTTQADTQRTITKDGFLVVPATISKVGVFDYLATELGLKEDGIKKVARTEKSLFSDETIKSFENATLTVGHLKDGVNAKNWKQLSVGVVRNVKRVGDELTAEAWIYDEQAIKTVQEHGVEQLSCGYDCDIKPSTVQDADFEMSPMIGNHVAIVAKGRCGGSVKLADEDKTIMGKTAKILDAFLGAFGIKLSDEQKKQIEDEEKSGSEEGKEPKGEQPTKPKEKKSEPENKKEDDVEKEELEKSLKAKDEEIQQLKDAQAKRDAEVKQAAVLADAKTAFKEVNFADNATVREIQESAVVAQGIFTKDEAAKLSDEEISGAYQTAKVVVAKLADERKSLGNILLGDAEPKAAPKIDFNKTYNS.

The tract at residues 199–267 (QKKQIEDEEK…QLKDAQAKRD (69 aa)) is disordered.

This is an uncharacterized protein from Haemophilus influenzae (strain ATCC 51907 / DSM 11121 / KW20 / Rd).